The following is a 56-amino-acid chain: Frontoxin I (56 aa).

4 cysteine pairs are disulfide-bonded: C3-C22, C17-C39, C41-C52, and C53-C56.

This sequence belongs to the three-finger toxin family. Short-chain subfamily. Type I alpha-neurotoxin sub-subfamily. As to expression, expressed by the venom gland.

Its subcellular location is the secreted. Binds to muscle nicotinic acetylcholine receptor (nAChR) and inhibit acetylcholine from binding to the receptor, thereby impairing neuromuscular transmission. The sequence is that of Frontoxin I from Micrurus frontalis (Coral snake).